Reading from the N-terminus, the 723-residue chain is Epidermal growth factor receptor kinase substrate 8-like protein 1 (723 aa).

The PTB domain maps to 35-164; it reads QYPVNHLVTF…LHNYRSGRGE (130 aa). Residues 162–183 show a composition bias toward basic and acidic residues; it reads RGERRAAALRATQEELQRDRSP. 4 disordered regions span residues 162–247, 442–477, 537–589, and 609–636; these read RGER…PRGP, KQLQ…LESE, GPRL…GLDP, and LAQG…GSDA. A Phosphoserine modification is found at Ser-182. Thr-187 carries the phosphothreonine modification. The SH3 domain maps to 478 to 537; sequence TAGKWVLCNYDFQARNSSELSVKQRDVLEVLDDSRKWWKVRDPAGQEGYVPYNILTPYPG. Residues 543–552 are compositionally biased toward polar residues; that stretch reads SQSPARSLNS. Positions 553–568 are enriched in pro residues; sequence TPPPPPAPAPAPPPAL. The span at 571–580 shows a compositional bias: basic and acidic residues; it reads PRWDRPRWDS. Residues 689–719 adopt a coiled-coil conformation; that stretch reads VQRSLLEDKEKVSELEAVMEKQKKKVEGEVE.

Belongs to the EPS8 family. As to quaternary structure, interacts with ABI1. Part of a complex that contains SOS1, ABI1 and EPS8L2. Associates with F-actin. Detected in placenta.

Its subcellular location is the cytoplasm. Stimulates guanine exchange activity of SOS1. May play a role in membrane ruffling and remodeling of the actin cytoskeleton. The chain is Epidermal growth factor receptor kinase substrate 8-like protein 1 (EPS8L1) from Homo sapiens (Human).